We begin with the raw amino-acid sequence, 260 residues long: Thiazole synthase (260 aa).

Lys102 functions as the Schiff-base intermediate with DXP in the catalytic mechanism. 1-deoxy-D-xylulose 5-phosphate-binding positions include Gly163, 189–190 (AG), and 211–212 (NT).

This sequence belongs to the ThiG family. In terms of assembly, homotetramer. Forms heterodimers with either ThiH or ThiS.

Its subcellular location is the cytoplasm. It catalyses the reaction [ThiS sulfur-carrier protein]-C-terminal-Gly-aminoethanethioate + 2-iminoacetate + 1-deoxy-D-xylulose 5-phosphate = [ThiS sulfur-carrier protein]-C-terminal Gly-Gly + 2-[(2R,5Z)-2-carboxy-4-methylthiazol-5(2H)-ylidene]ethyl phosphate + 2 H2O + H(+). It functions in the pathway cofactor biosynthesis; thiamine diphosphate biosynthesis. In terms of biological role, catalyzes the rearrangement of 1-deoxy-D-xylulose 5-phosphate (DXP) to produce the thiazole phosphate moiety of thiamine. Sulfur is provided by the thiocarboxylate moiety of the carrier protein ThiS. In vitro, sulfur can be provided by H(2)S. This chain is Thiazole synthase, found in Citrifermentans bemidjiense (strain ATCC BAA-1014 / DSM 16622 / JCM 12645 / Bem) (Geobacter bemidjiensis).